A 735-amino-acid chain; its full sequence is 1,4-alpha-glucan branching enzyme GlgB 1 (735 aa).

Asp-418 functions as the Nucleophile in the catalytic mechanism. Glu-471 functions as the Proton donor in the catalytic mechanism.

The protein belongs to the glycosyl hydrolase 13 family. GlgB subfamily. In terms of assembly, monomer.

The enzyme catalyses Transfers a segment of a (1-&gt;4)-alpha-D-glucan chain to a primary hydroxy group in a similar glucan chain.. Its pathway is glycan biosynthesis; glycogen biosynthesis. Catalyzes the formation of the alpha-1,6-glucosidic linkages in glycogen by scission of a 1,4-alpha-linked oligosaccharide from growing alpha-1,4-glucan chains and the subsequent attachment of the oligosaccharide to the alpha-1,6 position. In Rhizobium johnstonii (strain DSM 114642 / LMG 32736 / 3841) (Rhizobium leguminosarum bv. viciae), this protein is 1,4-alpha-glucan branching enzyme GlgB 1.